We begin with the raw amino-acid sequence, 317 residues long: Dehydrogenase/reductase SDR family protein 7-like (317 aa).

The Cytoplasmic segment spans residues 1–10; that stretch reads MKNLAERSAG. A helical; Signal-anchor for type II membrane protein membrane pass occupies residues 11–31; it reads SLYWWLLATLFLPIAIPGLVL. Over 32-317 the chain is Peroxisomal; it reads KLLTMMKEQR…KKRAEKLNST (286 aa). 52 to 76 serves as a coordination point for NAD(+); sequence LITGASSGLGEALAHSFFLAGCKVV. Substrate is bound at residue Ser-189. Catalysis depends on Tyr-202, which acts as the Proton acceptor.

Belongs to the short-chain dehydrogenases/reductases (SDR) family.

The protein resides in the peroxisome membrane. Functionally, putative oxidoreductase. The protein is Dehydrogenase/reductase SDR family protein 7-like of Anopheles gambiae (African malaria mosquito).